A 307-amino-acid polypeptide reads, in one-letter code: Glutenin, low molecular weight subunit 1D1 (307 aa).

The N-terminal stretch at 1–23 is a signal peptide; it reads MKTFLVFALLAVAATSAIAQMET. 2 disordered regions span residues 31–88 and 105–126; these read RPWQ…ILPQ and PFSQ…QQQQ. Residues 43-88 show a composition bias toward low complexity; that stretch reads TFPQQPLFSQQQQQQLFPQQPSFSQQQPPFWQQQPPFSQQQPILPQ.

Belongs to the gliadin/glutenin family. As to quaternary structure, disulfide-bridge linked aggregates. As to expression, expressed in endosperm, but not in husk and leaf tissues.

Functionally, glutenins are high-molecular weight seed storage proteins of wheat endosperm. Thought to be responsible for the visco-elastic property of wheat dough. This Triticum aestivum (Wheat) protein is Glutenin, low molecular weight subunit 1D1.